The following is a 299-amino-acid chain: Acetylglutamate kinase (299 aa).

Substrate contacts are provided by residues 72 to 73 (GG), R94, and N196.

The protein belongs to the acetylglutamate kinase family. ArgB subfamily.

Its subcellular location is the cytoplasm. It carries out the reaction N-acetyl-L-glutamate + ATP = N-acetyl-L-glutamyl 5-phosphate + ADP. It functions in the pathway amino-acid biosynthesis; L-arginine biosynthesis; N(2)-acetyl-L-ornithine from L-glutamate: step 2/4. Its function is as follows. Catalyzes the ATP-dependent phosphorylation of N-acetyl-L-glutamate. This is Acetylglutamate kinase from Burkholderia mallei (strain NCTC 10247).